The primary structure comprises 127 residues: Protein ApaG (127 aa).

Residues 3–127 (DDPRYRVEVE…FVLSVPRTLH (125 aa)) enclose the ApaG domain.

The protein is Protein ApaG of Xanthomonas euvesicatoria pv. vesicatoria (strain 85-10) (Xanthomonas campestris pv. vesicatoria).